The chain runs to 186 residues: Ribosome-recycling factor (186 aa).

The protein belongs to the RRF family.

Its subcellular location is the cytoplasm. In terms of biological role, responsible for the release of ribosomes from messenger RNA at the termination of protein biosynthesis. May increase the efficiency of translation by recycling ribosomes from one round of translation to another. This Cupriavidus necator (strain ATCC 17699 / DSM 428 / KCTC 22496 / NCIMB 10442 / H16 / Stanier 337) (Ralstonia eutropha) protein is Ribosome-recycling factor.